The primary structure comprises 63 residues: Probable rubredoxin (63 aa).

Residues 11–62 form the Rubredoxin-like domain; that stretch reads MKRYKCRVCGYIYDPEKGEPRTDTPPGTPFEDLPETWRCPSCGAKKKMFKPL. The Fe cation site is built by C16, C19, C49, and C52.

It belongs to the rubredoxin family. Fe(3+) is required as a cofactor.

Rubredoxin is a small nonheme, iron protein lacking acid-labile sulfide. Its single Fe, chelated to 4 Cys, functions as an electron acceptor and may also stabilize the conformation of the molecule. This is Probable rubredoxin from Methanothermobacter thermautotrophicus (strain ATCC 29096 / DSM 1053 / JCM 10044 / NBRC 100330 / Delta H) (Methanobacterium thermoautotrophicum).